Reading from the N-terminus, the 216-residue chain is Somatotropin (216 aa).

A signal peptide spans 1–26 (MAAGPRTSALLAFALLCLPWTREVGA). Histidine 45 lines the Zn(2+) pocket. A disulfide bridge links cysteine 78 with cysteine 189. Residue serine 131 is modified to Phosphoserine. Glutamate 198 serves as a coordination point for Zn(2+). A disulfide bridge connects residues cysteine 206 and cysteine 214.

The protein belongs to the somatotropin/prolactin family.

It is found in the secreted. Functionally, plays an important role in growth control. Its major role in stimulating body growth is to stimulate the liver and other tissues to secrete IGF1. It stimulates both the differentiation and proliferation of myoblasts. It also stimulates amino acid uptake and protein synthesis in muscle and other tissues. This is Somatotropin (GH1) from Sus scrofa (Pig).